Here is a 408-residue protein sequence, read N- to C-terminus: Phosphoglycerate kinase (408 aa).

Substrate-binding positions include 22–24, arginine 39, 60–63, arginine 117, and arginine 157; these read DIN and HQSR. ATP-binding positions include glutamate 332 and 358–361; that span reads GGHT.

It belongs to the phosphoglycerate kinase family. As to quaternary structure, monomer.

It is found in the cytoplasm. It carries out the reaction (2R)-3-phosphoglycerate + ATP = (2R)-3-phospho-glyceroyl phosphate + ADP. It participates in carbohydrate degradation; glycolysis; pyruvate from D-glyceraldehyde 3-phosphate: step 2/5. This is Phosphoglycerate kinase from Thermoplasma volcanium (strain ATCC 51530 / DSM 4299 / JCM 9571 / NBRC 15438 / GSS1).